The chain runs to 210 residues: MALPQMCDGSHLASTLRYCMTVSGTVVLVAGTLCFAWWSEGDATAQPGQLAPPTEYPVPEGPSPLLRSVSFVCCGAGGLLLLIGLLWSVKASIPGPPRWDPYHLSRDLYYLTVESSEKESCRTPKVVDIPTYEEAVSFPVAEGPPTPPAYPTEEALEPSGSRDALLSTQPAWPPPSYESISLALDAVSAETTPSATRSCSGLVQTARGGS.

2 helical membrane-spanning segments follow: residues 18 to 38 and 69 to 89; these read YCMT…FAWW and VSFV…LWSV. Residues 140–172 are disordered; the sequence is VAEGPPTPPAYPTEEALEPSGSRDALLSTQPAW.

It is found in the membrane. The sequence is that of Transmembrane protein 61 (TMEM61) from Homo sapiens (Human).